A 310-amino-acid chain; its full sequence is MNDVPENANEDCPGATSADAGKAFSCTGCPNQTLCASGEIRRPDSDLLAVTDRLKNVRHKILILSGKGGVGKSAVAANLARALAVNDKIQVGLLDIDICGPSQARMLGVEQESVHESGDGWCPIVVKDNLIVMSIAFLLQNRSEAVIWRGARKNALIKQFLKDVDWGTLDYLLIDTPPGTSDEHISIVQFLLQAGSVDGAIIVTTPQEISLLDVRKEINFCRRTKINILGIVENMSSFICPCCSNVSQLFPRTTGGAEMMCNELSVPLLALLPFDSHMAKCADSGEDYFEKYHNSALAKEFEKLAQLISK.

[4Fe-4S] cluster-binding residues include Cys12, Cys26, Cys29, and Cys35. Gly66–Ser73 is a binding site for ATP. Cys240 and Cys243 together coordinate [4Fe-4S] cluster.

The protein belongs to the Mrp/NBP35 ATP-binding proteins family. NUBP1/NBP35 subfamily. In terms of assembly, heterotetramer of 2 NUBP1 and 2 NUBP2 chains. It depends on [4Fe-4S] cluster as a cofactor.

The protein resides in the cytoplasm. Functionally, component of the cytosolic iron-sulfur (Fe/S) protein assembly (CIA) machinery. Required for maturation of extramitochondrial Fe-S proteins. The NUBP1-NUBP2 heterotetramer forms a Fe-S scaffold complex, mediating the de novo assembly of an Fe-S cluster and its transfer to target apoproteins. The polypeptide is Cytosolic Fe-S cluster assembly factor NUBP1 homolog (Brugia malayi (Filarial nematode worm)).